Here is a 513-residue protein sequence, read N- to C-terminus: Noroxomaritidine synthase 2 (513 aa).

A helical transmembrane segment spans residues 14–34; sequence HYPEILIAIACFLIFSLLLSA. Cys458 provides a ligand contact to heme.

Belongs to the cytochrome P450 family. Requires heme as cofactor.

The protein localises to the membrane. The enzyme catalyses 4'-O-methylnorbelladine + reduced [NADPH--hemoprotein reductase] + O2 = (10bR,4aS)-noroxomaritidine + oxidized [NADPH--hemoprotein reductase] + 2 H2O + H(+). It catalyses the reaction 4'-O-methylnorbelladine + reduced [NADPH--hemoprotein reductase] + O2 = (10bS,4aR)-noroxomaritidine + oxidized [NADPH--hemoprotein reductase] + 2 H2O + H(+). The protein operates within alkaloid biosynthesis. Functionally, cytochrome P450 that catalyzes an intramolecular para-para' C-C phenol coupling of 4'-O-methylnorbelladine in alkaloids biosynthesis, including haemanthamine- and crinamine-type alkaloids, promising anticancer agents. Catalyzes the formation of (10bR,4aS)-noroxomaritidine and (10bS,4aR)-noroxomaritidine from 4'-O-methylnorbelladine. The polypeptide is Noroxomaritidine synthase 2 (Narcissus aff. pseudonarcissus MK-2014 (Daffodil)).